The sequence spans 625 residues: Threonine--tRNA ligase (625 aa).

The tract at residues 1-147 (MRILLIHSDY…TIVPGEAKKE (147 aa)) is editing domain. Residues 206-505 (PHVKIMLEQE…MKKGKKPMYP (300 aa)) are catalytic. Zn(2+) is bound by residues C298, H350, and H474.

This sequence belongs to the class-II aminoacyl-tRNA synthetase family. As to quaternary structure, homodimer. Zn(2+) is required as a cofactor.

Its subcellular location is the cytoplasm. The enzyme catalyses tRNA(Thr) + L-threonine + ATP = L-threonyl-tRNA(Thr) + AMP + diphosphate + H(+). Catalyzes the attachment of threonine to tRNA(Thr) in a two-step reaction: L-threonine is first activated by ATP to form Thr-AMP and then transferred to the acceptor end of tRNA(Thr). Also edits incorrectly charged L-seryl-tRNA(Thr). In Thermococcus sibiricus (strain DSM 12597 / MM 739), this protein is Threonine--tRNA ligase.